We begin with the raw amino-acid sequence, 464 residues long: Soluble pyridine nucleotide transhydrogenase (464 aa).

35–44 (DNRPLVGGNC) contributes to the FAD binding site.

Belongs to the class-I pyridine nucleotide-disulfide oxidoreductase family. FAD is required as a cofactor.

It is found in the cytoplasm. The enzyme catalyses NAD(+) + NADPH = NADH + NADP(+). Functionally, conversion of NADPH, generated by peripheral catabolic pathways, to NADH, which can enter the respiratory chain for energy generation. In Stutzerimonas stutzeri (strain A1501) (Pseudomonas stutzeri), this protein is Soluble pyridine nucleotide transhydrogenase.